We begin with the raw amino-acid sequence, 1828 residues long: Unconventional myosin-Va (1828 aa).

An N-acetylalanine modification is found at A2. In terms of domain architecture, Myosin N-terminal SH3-like spans 8 to 60 (TKFARVWIPDPEEVWKSAELLKDYKPGDKVLLLHLEEGKDLEYRLDPKTSELP). The Myosin motor domain maps to 69–763 (VGENDLTALS…QVAYLEKLRA (695 aa)). 163–170 (GESGAGKT) contributes to the ATP binding site. The tract at residues 599–633 (ISPTSATSSGRTPLTRVPVKPTKGRPGQTAKEHKK) is disordered. S600 carries the post-translational modification Phosphoserine. Residues 600-610 (SPTSATSSGRT) show a composition bias toward polar residues. The actin-binding stretch occupies residues 643-665 (LHLLMETLNATTPHYVRCIKPND). IQ domains follow at residues 766–788 (LRAACIRIQKTIRGWLLRKRYLC), 789–813 (MQRAAITVQRYVRGYQARCYAKFLR), 814–836 (RTKAATTIQKYWRMYVVRRKYKI), 837–861 (RRAATIVLQSYLRGYLARNRYRKIL), 862–884 (REHKAVIIQKRVRGWLARTHYKR), and 885–914 (TMKAIIYLQCCFRRMMAKRELKKLKIEARS). Coiled coils occupy residues 914–1239 (SVER…EVNA) and 1314–1418 (GLKE…ELEV). Residue T1032 is modified to Phosphothreonine. Residues 1105–1147 (VPKPGHKRTDSTHSSNESEYTFSSEFAETEDIAPRTEEPTEKK) are disordered. Polar residues predominate over residues 1116 to 1130 (THSSNESEYTFSSEF). Basic and acidic residues predominate over residues 1136-1147 (IAPRTEEPTEKK). A phosphoserine mark is found at S1425 and S1625. A Dilute domain is found at 1507 to 1783 (TSTINSIKKV…IRTIQVRLRD (277 aa)). T1733 is modified (phosphothreonine).

Belongs to the TRAFAC class myosin-kinesin ATPase superfamily. Myosin family. In terms of assembly, may be a homodimer, which associates with multiple calmodulin or myosin light chains. Interacts with RIPL2, the interaction is required for its role in dendrite formation. Interacts with MLPH. Interacts with SYTL4. Interacts with MYRIP. Interacts with RAB10; mediates the transport to the plasma membrane of SLC2A4/GLUT4 storage vesicles. Interacts with FMR1; this interaction occurs in association with polyribosome.

It carries out the reaction ATP + H2O = ADP + phosphate + H(+). Functionally, processive actin-based motor that can move in large steps approximating the 36-nm pseudo-repeat of the actin filament. Can hydrolyze ATP in the presence of actin, which is essential for its function as a motor protein. Involved in melanosome transport. Also mediates the transport of vesicles to the plasma membrane. May also be required for some polarization process involved in dendrite formation. The polypeptide is Unconventional myosin-Va (Myo5a) (Rattus norvegicus (Rat)).